Reading from the N-terminus, the 576-residue chain is N-acetylmuramoyl-L-alanine amidase (576 aa).

Residues M1–A21 form the signal peptide. Residue N77 is glycosylated (N-linked (GlcNAc...) asparagine). S239 carries the post-translational modification Phosphoserine. A deamidated asparagine mark is found at N274 and N322. N367 is a glycosylation site (N-linked (GlcNAc...) asparagine). The N-acetylmuramoyl-L-alanine amidase domain maps to F406–G532. Zn(2+) is bound at residue H410. A disulfide bond links C419 and C425. An N-linked (GlcNAc...) asparagine glycan is attached at N485. Zn(2+) is bound by residues H522 and C530. Positions K550–Q576 are disordered.

Belongs to the N-acetylmuramoyl-L-alanine amidase 2 family. It depends on Zn(2+) as a cofactor. As to expression, strongly expressed in liver and fetal liver, and secreted into serum. Expressed to a much lesser extent in transverse colon, lymph nodes, heart, thymus, pancreas, descending colon, stomach and testis. Isoform 2 is not detected in the liver or serum.

The protein resides in the secreted. It localises to the membrane. It carries out the reaction Hydrolyzes the link between N-acetylmuramoyl residues and L-amino acid residues in certain cell-wall glycopeptides.. May play a scavenger role by digesting biologically active peptidoglycan (PGN) into biologically inactive fragments. Has no direct bacteriolytic activity. In Homo sapiens (Human), this protein is N-acetylmuramoyl-L-alanine amidase (PGLYRP2).